Here is a 121-residue protein sequence, read N- to C-terminus: uncharacterized protein (121 aa).

One can recognise a Cupin type-2 domain in the interval 47-101; it reads SEVPHYHAEHDLTFTVLKGKGELYLEGEKKKLKEGDWAFIPKGAVHFYRNTSELS.

This is an uncharacterized protein from Aquifex aeolicus (strain VF5).